The chain runs to 550 residues: Glucose-6-phosphate isomerase (550 aa).

The active-site Proton donor is glutamate 356. Catalysis depends on residues histidine 387 and lysine 515.

This sequence belongs to the GPI family.

Its subcellular location is the cytoplasm. It carries out the reaction alpha-D-glucose 6-phosphate = beta-D-fructose 6-phosphate. It participates in carbohydrate biosynthesis; gluconeogenesis. It functions in the pathway carbohydrate degradation; glycolysis; D-glyceraldehyde 3-phosphate and glycerone phosphate from D-glucose: step 2/4. Its function is as follows. Catalyzes the reversible isomerization of glucose-6-phosphate to fructose-6-phosphate. The sequence is that of Glucose-6-phosphate isomerase from Vibrio cholerae serotype O1 (strain ATCC 39315 / El Tor Inaba N16961).